Here is a 352-residue protein sequence, read N- to C-terminus: UDP-N-acetylglucosamine--N-acetylmuramyl-(pentapeptide) pyrophosphoryl-undecaprenol N-acetylglucosamine transferase (352 aa).

Serine 195 and glutamine 287 together coordinate UDP-N-acetyl-alpha-D-glucosamine.

It belongs to the glycosyltransferase 28 family. MurG subfamily.

Its subcellular location is the cell membrane. It catalyses the reaction Mur2Ac(oyl-L-Ala-gamma-D-Glu-L-Lys-D-Ala-D-Ala)-di-trans,octa-cis-undecaprenyl diphosphate + UDP-N-acetyl-alpha-D-glucosamine = beta-D-GlcNAc-(1-&gt;4)-Mur2Ac(oyl-L-Ala-gamma-D-Glu-L-Lys-D-Ala-D-Ala)-di-trans,octa-cis-undecaprenyl diphosphate + UDP + H(+). The protein operates within cell wall biogenesis; peptidoglycan biosynthesis. Its function is as follows. Cell wall formation. Catalyzes the transfer of a GlcNAc subunit on undecaprenyl-pyrophosphoryl-MurNAc-pentapeptide (lipid intermediate I) to form undecaprenyl-pyrophosphoryl-MurNAc-(pentapeptide)GlcNAc (lipid intermediate II). The sequence is that of UDP-N-acetylglucosamine--N-acetylmuramyl-(pentapeptide) pyrophosphoryl-undecaprenol N-acetylglucosamine transferase from Streptococcus pneumoniae (strain Hungary19A-6).